A 705-amino-acid chain; its full sequence is Tyrosine decarboxylase (705 aa).

Positions Arg-22–Pro-32 are enriched in polar residues. The disordered stretch occupies residues Arg-22–Glu-81. Residues Ser-33–Thr-55 show a composition bias toward low complexity. An N6-(pyridoxal phosphate)lysine modification is found at Lys-380. A coiled-coil region spans residues Val-554 to Lys-620. Over residues His-667–Pro-678 the composition is skewed to polar residues. Residues His-667–Asp-687 are disordered.

Belongs to the group II decarboxylase family. It depends on pyridoxal 5'-phosphate as a cofactor. Expressed in the gonadal sheath projections in between the oocytes, in head RIM motor neurons and RIC interneurons.

The protein localises to the cytoplasm. Its subcellular location is the cell projection. It localises to the axon. The protein resides in the perikaryon. The catalysed reaction is L-tyrosine + H(+) = tyramine + CO2. In terms of biological role, required for the decarboxylation of tyrosine to tyramine, a precursor of octopamine but probably also itself a neurotransmitter. Involved in the regulation of egg laying, which is inhibited by tyramine. Also involved in controlling locomotion and head movements. Due to its involvement in octopamine biosynthesis, also required for crtc-1-dependent regulation of AMPK-mediated longevity which requires octopamine signaling. This is Tyrosine decarboxylase from Caenorhabditis elegans.